The following is a 133-amino-acid chain: DNA-directed RNA polymerase subunit omega (133 aa).

The protein belongs to the RNA polymerase subunit omega family. The RNAP catalytic core consists of 2 alpha, 1 beta, 1 beta' and 1 omega subunit. When a sigma factor is associated with the core the holoenzyme is formed, which can initiate transcription.

It catalyses the reaction RNA(n) + a ribonucleoside 5'-triphosphate = RNA(n+1) + diphosphate. In terms of biological role, promotes RNA polymerase assembly. Latches the N- and C-terminal regions of the beta' subunit thereby facilitating its interaction with the beta and alpha subunits. The polypeptide is DNA-directed RNA polymerase subunit omega (Brucella abortus (strain S19)).